The following is a 157-amino-acid chain: uncharacterized protein (157 aa).

An N-acetyltransferase domain is found at 9–154; the sequence is LLINYKTLDE…ETNLNAVTNE (146 aa).

This is an uncharacterized protein from Bacillus cereus (strain ATCC 14579 / DSM 31 / CCUG 7414 / JCM 2152 / NBRC 15305 / NCIMB 9373 / NCTC 2599 / NRRL B-3711).